The chain runs to 455 residues: Serine--tRNA ligase (455 aa).

Threonine 252–glutamate 254 is a binding site for L-serine. Residues arginine 283–glutamate 285 and valine 299 contribute to the ATP site. Glutamate 306 lines the L-serine pocket. Glutamate 370–serine 373 provides a ligand contact to ATP. Threonine 406 contributes to the L-serine binding site.

This sequence belongs to the class-II aminoacyl-tRNA synthetase family. Type-1 seryl-tRNA synthetase subfamily. Homodimer. The tRNA molecule binds across the dimer.

The protein localises to the cytoplasm. The enzyme catalyses tRNA(Ser) + L-serine + ATP = L-seryl-tRNA(Ser) + AMP + diphosphate + H(+). It catalyses the reaction tRNA(Sec) + L-serine + ATP = L-seryl-tRNA(Sec) + AMP + diphosphate + H(+). It participates in aminoacyl-tRNA biosynthesis; selenocysteinyl-tRNA(Sec) biosynthesis; L-seryl-tRNA(Sec) from L-serine and tRNA(Sec): step 1/1. Its function is as follows. Catalyzes the attachment of serine to tRNA(Ser). Is also able to aminoacylate tRNA(Sec) with serine, to form the misacylated tRNA L-seryl-tRNA(Sec), which will be further converted into selenocysteinyl-tRNA(Sec). The chain is Serine--tRNA ligase from Thermococcus sibiricus (strain DSM 12597 / MM 739).